Here is a 480-residue protein sequence, read N- to C-terminus: uncharacterized protein (480 aa).

The N-terminal stretch at 1–21 (MSRYFSFFFLALFLHYRIIVA) is a signal peptide. Disordered regions lie at residues 38 to 72 (SSHL…SAEC) and 116 to 147 (SPLI…NDQT). A compositionally biased stretch (low complexity) spans 51 to 60 (LTQSHSSLSD). Residues 133-144 (LKTSSEAQGDTN) are compositionally biased toward polar residues. Residues 153 to 173 (YAVEIACVCFLIALAINYFVG) traverse the membrane as a helical segment. The segment at 404–480 (QARNKTESGR…VPKMKMSRSH (77 aa)) is disordered. A compositionally biased stretch (basic and acidic residues) spans 407–465 (NKTESGRQKAAEEAYKELHNARQEALQKKKAEKKKMMEEAEAKMSAEVIRKKEAKERAR). A coiled-coil region spans residues 411–467 (SGRQKAAEEAYKELHNARQEALQKKKAEKKKMMEEAEAKMSAEVIRKKEAKERARQV). Positions 466–480 (QVKKAVPKMKMSRSH) are enriched in basic residues.

It is found in the membrane. This is an uncharacterized protein from Arabidopsis thaliana (Mouse-ear cress).